Consider the following 644-residue polypeptide: Protein SNOWY COTYLEDON 3 (644 aa).

3 disordered regions span residues 1–129, 162–252, and 290–414; these read MVAA…TRTE, ETAT…DGRL, and SDTD…SRVR. Over residues 53–77 the composition is skewed to low complexity; the sequence is SPSPSHSTTTTTTTATSTSTSSSSS. The segment covering 91–112 has biased composition (polar residues); the sequence is LSRTTNSASNLVYTPSSLPKRS. Basic and acidic residues predominate over residues 172–190; that stretch reads CTPERRRATPVRDQRENSK. Composition is skewed to polar residues over residues 290 to 302 and 314 to 332; these read SDTDSVSSGSTNG and TRSLPRNGMASTKFWQETN. Composition is skewed to low complexity over residues 343–370 and 397–412; these read SPQCSSPSSRISSISSKFSQSKRFSSDS and ATATSAPARTSSSPSR. The QWRF motif signature appears at 463-466; sequence QWRF.

This sequence belongs to the QWRF family. Expressed in young developing tissues, such as seedlings, roots, flowers, buds and young siliques, and to a lesser extent in mature green tissues.

It is found in the peroxisome. Its function is as follows. Probable microtubule-associated peroxisomal protein required for chloroplast biogenesis and for the formation of the prolamellar body and prothylakoids in etioplasts. Not involved in peroxisomal metabolism, including mobilization of storage compounds during germination, fatty acid beta-oxydation or photorespiration. In Arabidopsis thaliana (Mouse-ear cress), this protein is Protein SNOWY COTYLEDON 3 (SCO3).